A 249-amino-acid polypeptide reads, in one-letter code: ATP synthase subunit a (249 aa).

Transmembrane regions (helical) follow at residues 30–50 (QSPV…YVGM), 86–106 (FFPF…LGLL), 115–135 (HIAV…IVSL), 142–162 (FFAH…LVPI), 191–211 (MFAA…VLAV), and 218–238 (VALM…FAIL).

This sequence belongs to the ATPase A chain family. In terms of assembly, F-type ATPases have 2 components, CF(1) - the catalytic core - and CF(0) - the membrane proton channel. CF(1) has five subunits: alpha(3), beta(3), gamma(1), delta(1), epsilon(1). CF(0) has three main subunits: a(1), b(2) and c(9-12). The alpha and beta chains form an alternating ring which encloses part of the gamma chain. CF(1) is attached to CF(0) by a central stalk formed by the gamma and epsilon chains, while a peripheral stalk is formed by the delta and b chains.

The protein localises to the cell inner membrane. Its function is as follows. Key component of the proton channel; it plays a direct role in the translocation of protons across the membrane. This is ATP synthase subunit a from Gluconacetobacter diazotrophicus (strain ATCC 49037 / DSM 5601 / CCUG 37298 / CIP 103539 / LMG 7603 / PAl5).